The sequence spans 278 residues: Secoisolariciresinol dehydrogenase (278 aa).

NAD(+)-binding positions include 23–28 (GGAGGI), aspartate 47, valine 73, and asparagine 99. Substrate contacts are provided by serine 104 and serine 164. The active-site Proton donor/acceptor is tyrosine 167. Residues lysine 171 and valine 200 each coordinate NAD(+).

Belongs to the short-chain dehydrogenases/reductases (SDR) family. Homotetramer. Mostly expressed in stems and rhizomes, and, to a lower extent, in leaves.

The catalysed reaction is (-)-secoisolariciresinol + 2 NAD(+) = (-)-matairesinol + 2 NADH + 2 H(+). It functions in the pathway aromatic compound metabolism; phenylpropanoid biosynthesis. In terms of biological role, oxidoreductase involved in lignan biosynthesis. Also involved in the biosynthesis of etoposide, a chemotherapeutic compound of the topoisomerase inhibitor family. Catalyzes the stereospecific conversion of (-)-secoisolariciresinol to (-)-matairesinol via a lactol intermediate. The sequence is that of Secoisolariciresinol dehydrogenase from Sinopodophyllum hexandrum (Himalayan may apple).